The primary structure comprises 408 residues: ORC1-type DNA replication protein 15 (408 aa).

ATP-binding positions include 60–64, Tyr-208, and Arg-220; that span reads VGKTA.

Belongs to the CDC6/cdc18 family.

Functionally, involved in regulation of DNA replication. The polypeptide is ORC1-type DNA replication protein 15 (cdc6o) (Haloarcula marismortui (strain ATCC 43049 / DSM 3752 / JCM 8966 / VKM B-1809) (Halobacterium marismortui)).